A 525-amino-acid polypeptide reads, in one-letter code: Bifunctional purine biosynthesis protein PurH (525 aa).

The MGS-like domain occupies 1–148 (MPSNNLIKNA…KNYKNVIVIV (148 aa)).

This sequence belongs to the PurH family.

The enzyme catalyses (6R)-10-formyltetrahydrofolate + 5-amino-1-(5-phospho-beta-D-ribosyl)imidazole-4-carboxamide = 5-formamido-1-(5-phospho-D-ribosyl)imidazole-4-carboxamide + (6S)-5,6,7,8-tetrahydrofolate. It catalyses the reaction IMP + H2O = 5-formamido-1-(5-phospho-D-ribosyl)imidazole-4-carboxamide. It functions in the pathway purine metabolism; IMP biosynthesis via de novo pathway; 5-formamido-1-(5-phospho-D-ribosyl)imidazole-4-carboxamide from 5-amino-1-(5-phospho-D-ribosyl)imidazole-4-carboxamide (10-formyl THF route): step 1/1. It participates in purine metabolism; IMP biosynthesis via de novo pathway; IMP from 5-formamido-1-(5-phospho-D-ribosyl)imidazole-4-carboxamide: step 1/1. The sequence is that of Bifunctional purine biosynthesis protein PurH from Buchnera aphidicola subsp. Acyrthosiphon pisum (strain 5A).